The primary structure comprises 156 residues: Ribonuclease pancreatic (156 aa).

The first 28 residues, 1 to 28, serve as a signal peptide directing secretion; the sequence is MALEKSLALLPLLVLVLLVLGWVQPSLG. The segment covering 33-43 has biased composition (basic and acidic residues); the sequence is AKKFQRQHMDS. A disordered region spans residues 33–52; that stretch reads AKKFQRQHMDSDGSPSSNPT. Substrate contacts are provided by Lys35 and Arg38. The Proton acceptor role is filled by His40. 4 disulfides stabilise this stretch: Cys54/Cys112, Cys68/Cys123, Cys86/Cys138, and Cys93/Cys100. A glycan (N-linked (GlcNAc...) asparagine) is linked at Asn62. Residues 69-73, Lys94, and Arg113 contribute to the substrate site; that span reads KPVNT. An N-linked (GlcNAc...) asparagine glycan is attached at Asn116. The Proton donor role is filled by His147.

Belongs to the pancreatic ribonuclease family. Monomer. Interacts with and forms tight 1:1 complexes with RNH1. Dimerization of two such complexes may occur. Interaction with RNH1 inhibits this protein.

It is found in the secreted. It catalyses the reaction an [RNA] containing cytidine + H2O = an [RNA]-3'-cytidine-3'-phosphate + a 5'-hydroxy-ribonucleotide-3'-[RNA].. It carries out the reaction an [RNA] containing uridine + H2O = an [RNA]-3'-uridine-3'-phosphate + a 5'-hydroxy-ribonucleotide-3'-[RNA].. Endonuclease that catalyzes the cleavage of RNA on the 3' side of pyrimidine nucleotides. Acts on single-stranded and double-stranded RNA. In Saimiri sciureus (Common squirrel monkey), this protein is Ribonuclease pancreatic (RNASE1).